Consider the following 307-residue polypeptide: UDP-N-acetylenolpyruvoylglucosamine reductase (307 aa).

The region spanning 33–197 (TGGNADFYIT…LEAAFTLAPG (165 aa)) is the FAD-binding PCMH-type domain. R176 is a catalytic residue. Catalysis depends on S226, which acts as the Proton donor. Residue E296 is part of the active site.

Belongs to the MurB family. The cofactor is FAD.

It localises to the cytoplasm. The catalysed reaction is UDP-N-acetyl-alpha-D-muramate + NADP(+) = UDP-N-acetyl-3-O-(1-carboxyvinyl)-alpha-D-glucosamine + NADPH + H(+). Its pathway is cell wall biogenesis; peptidoglycan biosynthesis. Its function is as follows. Cell wall formation. This Staphylococcus aureus (strain COL) protein is UDP-N-acetylenolpyruvoylglucosamine reductase.